A 986-amino-acid polypeptide reads, in one-letter code: Ankyrin repeat, PH and SEC7 domain containing protein secG (986 aa).

Residues 1 to 28 (MGSTSNSTKNTGSTTTTTTTAAPATTAK) are compositionally biased toward low complexity. Residues 1–43 (MGSTSNSTKNTGSTTTTTTTAAPATTAKHSNSAPTRPSVHYYS) are disordered. Polar residues predominate over residues 29 to 43 (HSNSAPTRPSVHYYS). 15 ANK repeats span residues 34 to 63 (PTRPSVHYYSSTGDIEKLSNLLNNSATSPD), 68 to 97 (EKRTPLHHAAFCGSAACVNFLLDKKANANI), 101 to 131 (AGNTPLQWASSRGHLECIKLLVEKGGVDVNT), 135 to 164 (KNGTPLHKASLFASAECVLYLLNGKADPRA), 168 to 197 (NGETPLHHASAGGNPQCVELLIKADSKVNA), 201 to 230 (DCITPLHQASFSGHSSCVSLLLKKGAKVDP), 234 to 263 (HGISPLHNAASAGYVDCVEQLVRNGENINC), 267 to 296 (EGVTPLHHTCFNGNLQLTKRLIELGAKINM), 300 to 329 (MGETPLHKAAFNGHKEVCEYLLYLDPTMID), 334 to 363 (RQSTSLHLAAFNGLLDMVDLLIRYKAQINI), 367 to 396 (EGATPLHKASFNGHSSCAKLLVDKGAPICI), 400 to 429 (QGATPLHKAAFNGRSKCLATLIRSGAELEV), 433 to 462 (QGGTPLHNAAYNGHSDCCRILLKKGANVNA), 466 to 495 (HSSTPLHLASAAGARDTVDVLIQFKARIDA), and 499 to 528 (AGKTPLVYAIKKNHSDVARVLIRAGADLDQ). One can recognise an SEC7 domain in the interval 580–770 (QLAAEKQKLL…ENLYDKIVTN (191 aa)). Residues 784-895 (HVEKKGWLTK…WVQSIKSNIH (112 aa)) form the PH domain. A disordered region spans residues 911 to 986 (IRGRGKVSTK…PVQQQTSALS (76 aa)). Polar residues predominate over residues 920-929 (KPIQNRKQTI). Composition is skewed to low complexity over residues 936–953 (TTTTTTSTASNNVTSVGS) and 963–986 (SSGSKPVTFSSTSSPVQQQTSALS).

In Dictyostelium discoideum (Social amoeba), this protein is Ankyrin repeat, PH and SEC7 domain containing protein secG (secG).